The following is a 37-amino-acid chain: TSYGNGVHCNKSKCWIDVSELETYKAGTVSNPKDILW.

Cysteines 9 and 14 form a disulfide.

The protein resides in the secreted. Its function is as follows. Bacteriocin active against Listeria monocytogenes and Lactococcus cremoris. The protein is Bacteriocin lactococcin MMFII of Lactococcus lactis subsp. lactis (Streptococcus lactis).